A 393-amino-acid chain; its full sequence is uncharacterized protein (393 aa).

Positions 250-389 (AVIVYDTMYN…KCYEFGKRLA (140 aa)) constitute a Flavodoxin-like domain.

This is an uncharacterized protein from Methanocaldococcus jannaschii (strain ATCC 43067 / DSM 2661 / JAL-1 / JCM 10045 / NBRC 100440) (Methanococcus jannaschii).